The sequence spans 86 residues: Putative regulatory protein OB1501 (86 aa).

It belongs to the RemA family.

In Oceanobacillus iheyensis (strain DSM 14371 / CIP 107618 / JCM 11309 / KCTC 3954 / HTE831), this protein is Putative regulatory protein OB1501.